The sequence spans 899 residues: MCPLQIHVLHLIQGNQKNRKGKYVNMTRQLWYILPLLFLLCHCVTSERRCYFSKISKTCSHASKCLLKADCSDRNLTESPKFNESVVQIDLSNNSINVFPDLPRSLLVLDISRNPLKQFQKNAFARLQNLTTLSIVNNTYGLQPSNLTAGIFKGLTRLTYLDLRGSWNGTAYPEEVLSDLVSLNALRINGKQKGFGVLMRKIHALKRLDISGSEGDCKIDCLHAGYFQNVHGIQELNVSNCHLTNILEGTFSYITNLTHLDISYNEELSFNILRNISKDLKNTKIEVLKINKIHCTFGVGTQIYVSDLKDLQNTSLRELHANSNRLETIQSGVLMYLPKTLQHASVSDNKLTMGMYALETANLVNLKTYDMSLQFKSHDPRDIFSNCNDTRNGYIRNRRPHESEGEISVRKKLLNDQIYRWKDDQAFEVYQNTSNNNQHKLMFPFPSPFPVPLPQRLEIAYFNTSTLHYPLLKYRIGNNKIKEIYAQDNVFYDLQGPLENLEGLEILDLSNNFCTNLSTFFFDYLTGLKSVKLNHNILGFSLAKDEKGETFKNLLKLKHLEIKYNRIQVLPKKILRNLISLETLDLADNWLRKFKVDLKHIKGLRHIDLSNNQISELPPGVMRELDEIAKSSNLTVNLTGNSLLCNCENEHFLRWIVTSTIRFGFHGNDTCQTRFSKTGRVLMSQGNEFLLVLERNCRSYTAVIVLFSCVFVILLTVIVCGVVYRYRWKLRYLYYMTKGRYKGYSSLKTKSEEGDYEFDAFISYADEDRQFALHDMMKNVEREGNLKLCFHNRDFIPGFDIAVNITNAINNSRKTICVISSNYLNSYWCMYELNIGRMESIYSRNGEDVLFLVILENCSSSNIPFSVFDIIEKKSYIEYPNDTEGDIIFWRKLRDPISM.

The N-terminal stretch at methionine 1–serine 46 is a signal peptide. 4 N-linked (GlcNAc...) asparagine glycosylation sites follow: asparagine 25, asparagine 75, asparagine 83, and asparagine 93. Topologically, residues glutamate 47–alanine 702 are extracellular. LRR repeat units follow at residues asparagine 83–proline 103, arginine 104–arginine 126, glutamine 128–glycine 150, leucine 155–aspartate 179, valine 181–isoleucine 202, histidine 203–asparagine 229, and valine 230–tyrosine 253. 4 N-linked (GlcNAc...) asparagine glycosylation sites follow: asparagine 129, asparagine 137, asparagine 146, and asparagine 168. Asparagine 237, asparagine 256, asparagine 275, and asparagine 313 each carry an N-linked (GlcNAc...) asparagine glycan. LRR repeat units follow at residues leucine 257–asparagine 282, asparagine 313–tyrosine 336, proline 338–threonine 360, and leucine 363–asparagine 386. N-linked (GlcNAc...) asparagine glycosylation is found at asparagine 388, asparagine 432, and asparagine 463. LRR repeat units follow at residues histidine 468–aspartate 493, leucine 501–tyrosine 524, threonine 526–glutamate 549, leucine 554–asparagine 577, isoleucine 579–isoleucine 601, lysine 602–glutamate 624, and serine 631–arginine 654. N-linked (GlcNAc...) asparagine glycosylation is present at asparagine 516. Asparagine 633, asparagine 637, and asparagine 668 each carry an N-linked (GlcNAc...) asparagine glycan. A helical membrane pass occupies residues valine 703–valine 723. Residues tyrosine 724 to methionine 899 lie on the Cytoplasmic side of the membrane. The TIR domain maps to tyrosine 756–isoleucine 897.

It belongs to the Toll-like receptor family. As to expression, expressed in all tissues tested. The highest expression is in the hepatopancreas, with moderate expression in the gills, and low expression in the gonads, adductor muscle, hemocytes, and mantle.

The protein localises to the cell membrane. In terms of biological role, may be involved in the innate immune response. This Pinctada imbricata (Atlantic pearl-oyster) protein is Toll-like receptor 4.